The primary structure comprises 34 residues: Photosystem II reaction center protein M (34 aa).

A helical membrane pass occupies residues I5 to L25.

Belongs to the PsbM family. In terms of assembly, PSII is composed of 1 copy each of membrane proteins PsbA, PsbB, PsbC, PsbD, PsbE, PsbF, PsbH, PsbI, PsbJ, PsbK, PsbL, PsbM, PsbT, PsbX, PsbY, PsbZ, Psb30/Ycf12, at least 3 peripheral proteins of the oxygen-evolving complex and a large number of cofactors. It forms dimeric complexes.

It localises to the plastid. It is found in the chloroplast thylakoid membrane. Functionally, one of the components of the core complex of photosystem II (PSII). PSII is a light-driven water:plastoquinone oxidoreductase that uses light energy to abstract electrons from H(2)O, generating O(2) and a proton gradient subsequently used for ATP formation. It consists of a core antenna complex that captures photons, and an electron transfer chain that converts photonic excitation into a charge separation. This subunit is found at the monomer-monomer interface. The polypeptide is Photosystem II reaction center protein M (Nephroselmis olivacea (Green alga)).